Reading from the N-terminus, the 639-residue chain is Threonine--tRNA ligase (639 aa).

In terms of domain architecture, TGS spans 1–61 (MIKVALKDGS…DTDCDLNLFK (61 aa)). Residues 242 to 532 (DHRKLGKELG…LIEHYAGKFP (291 aa)) form a catalytic region. Cysteine 333, histidine 384, and histidine 509 together coordinate Zn(2+).

This sequence belongs to the class-II aminoacyl-tRNA synthetase family. Homodimer. The cofactor is Zn(2+).

The protein resides in the cytoplasm. The enzyme catalyses tRNA(Thr) + L-threonine + ATP = L-threonyl-tRNA(Thr) + AMP + diphosphate + H(+). In terms of biological role, catalyzes the attachment of threonine to tRNA(Thr) in a two-step reaction: L-threonine is first activated by ATP to form Thr-AMP and then transferred to the acceptor end of tRNA(Thr). Also edits incorrectly charged L-seryl-tRNA(Thr). This Clostridioides difficile (strain 630) (Peptoclostridium difficile) protein is Threonine--tRNA ligase.